The chain runs to 100 residues: Integration host factor subunit beta (100 aa).

The segment at 53–100 (LHHRPPRIGRNPKTGEPVALPGKYVPHFKPGKELRDRVNAGRHNPIQS) is disordered. Residues 82-91 (PGKELRDRVN) are compositionally biased toward basic and acidic residues.

The protein belongs to the bacterial histone-like protein family. In terms of assembly, heterodimer of an alpha and a beta chain.

Its function is as follows. This protein is one of the two subunits of integration host factor, a specific DNA-binding protein that functions in genetic recombination as well as in transcriptional and translational control. The polypeptide is Integration host factor subunit beta (Alkalilimnicola ehrlichii (strain ATCC BAA-1101 / DSM 17681 / MLHE-1)).